The chain runs to 302 residues: Nudix hydrolase 22, chloroplastic (302 aa).

The N-terminal 25 residues, 1–25 (MKSGASAASPTAKSFNFGSSRLLAL), are a transit peptide targeting the chloroplast. The Nudix hydrolase domain occupies 73 to 229 (PKKAAVLICL…DSDYVIWGLT (157 aa)). A Nudix box motif is present at residues 114-135 (KAEEHDKDDGITATREAEEEIG). 2 residues coordinate Mg(2+): Glu129 and Glu133.

Belongs to the Nudix hydrolase family. Mg(2+) serves as cofactor. Mn(2+) is required as a cofactor. Expressed in roots, leaves, stems and inflorescences.

The protein localises to the plastid. The protein resides in the chloroplast. Functionally, probably mediates the hydrolysis of some nucleoside diphosphate derivatives. In Arabidopsis thaliana (Mouse-ear cress), this protein is Nudix hydrolase 22, chloroplastic (NUDT22).